The primary structure comprises 156 residues: ADP-ribosylation factor-like protein 2-binding protein (156 aa).

It belongs to the ARL2BP family.

It is found in the cytoplasm. It localises to the mitochondrion intermembrane space. The protein localises to the cytoskeleton. The protein resides in the microtubule organizing center. Its subcellular location is the centrosome. It is found in the nucleus. It localises to the spindle. The protein localises to the cilium basal body. Its function is as follows. Plays a role as an effector of the ADP-ribosylation factor-like protein 2, ARL2. In Xenopus laevis (African clawed frog), this protein is ADP-ribosylation factor-like protein 2-binding protein (arl2bp).